Here is a 392-residue protein sequence, read N- to C-terminus: MSSLLVDNIGELVTNAGAGDGPLGIRRNAAVLVEDGLVAWVGPNRYPPPADRRIDAEGAAVLPGFVDSHAHLVFAGDRAAEFAARMAGEPYTGGGIRTTVGATRAATDDELRATVRRLRGEALRQGTTTVEIKSGYGLTVPDETRSLRLAAEVSEETTFLGAHLVPAEYADRPDDYVGLVCGPMLAAAAPHARWIDVFCERGAFDADHTRAILTCGQAAGLGARLHANQLGPGPGVQLGVELGAASVDHCTHLTDADVDALAGAGGATVATLLPGAEFSTRSPYPDARRLLDAGVTVALATDCNPGSSYTSSMPFCIALAVREMRMSPTEAVWAATAGGAAALRRTDVGQLTPGARADLMILDAPSHLHLAYRPGVPLIRQVLHNGVPQCRP.

Fe(3+)-binding residues include H69 and H71. The Zn(2+) site is built by H69 and H71. R78, Y136, and H163 together coordinate 4-imidazolone-5-propanoate. An N-formimidoyl-L-glutamate-binding site is contributed by Y136. H226 provides a ligand contact to Fe(3+). Position 226 (H226) interacts with Zn(2+). Q229 contacts 4-imidazolone-5-propanoate. D302 provides a ligand contact to Fe(3+). D302 lines the Zn(2+) pocket. Residues N304 and G306 each coordinate N-formimidoyl-L-glutamate. S307 contributes to the 4-imidazolone-5-propanoate binding site.

This sequence belongs to the metallo-dependent hydrolases superfamily. HutI family. It depends on Zn(2+) as a cofactor. The cofactor is Fe(3+).

It localises to the cytoplasm. The enzyme catalyses 4-imidazolone-5-propanoate + H2O = N-formimidoyl-L-glutamate. Its pathway is amino-acid degradation; L-histidine degradation into L-glutamate; N-formimidoyl-L-glutamate from L-histidine: step 3/3. In terms of biological role, catalyzes the hydrolytic cleavage of the carbon-nitrogen bond in imidazolone-5-propanoate to yield N-formimidoyl-L-glutamate. It is the third step in the universal histidine degradation pathway. The polypeptide is Imidazolonepropionase (Salinispora arenicola (strain CNS-205)).